The sequence spans 67 residues: Small ribosomal subunit protein bS21 (67 aa).

The protein belongs to the bacterial ribosomal protein bS21 family.

This chain is Small ribosomal subunit protein bS21, found in Oleidesulfovibrio alaskensis (strain ATCC BAA-1058 / DSM 17464 / G20) (Desulfovibrio alaskensis).